The following is a 144-amino-acid chain: Large ribosomal subunit protein uL13 (144 aa).

Belongs to the universal ribosomal protein uL13 family. Part of the 50S ribosomal subunit.

Functionally, this protein is one of the early assembly proteins of the 50S ribosomal subunit, although it is not seen to bind rRNA by itself. It is important during the early stages of 50S assembly. This is Large ribosomal subunit protein uL13 from Magnetococcus marinus (strain ATCC BAA-1437 / JCM 17883 / MC-1).